Consider the following 219-residue polypeptide: Glutathione S-transferase (219 aa).

Residues 2-89 (SQPILGYWDI…YLGRKYKLNG (88 aa)) enclose the GST N-terminal domain. Glutathione is bound by residues 8-9 (YW), 44-47 (RSEW), K51, 60-61 (NL), and 73-74 (QT). Residues 91 to 207 (NDHEEIRISM…YIKKQQPKTF (117 aa)) enclose the GST C-terminal domain. Substrate is bound at residue Y117.

It belongs to the GST superfamily. Mu family. Homodimer.

It is found in the cytoplasm. The catalysed reaction is RX + glutathione = an S-substituted glutathione + a halide anion + H(+). This chain is Glutathione S-transferase, found in Dermatophagoides pteronyssinus (European house dust mite).